Reading from the N-terminus, the 98-residue chain is Homeobox protein Ht-En (98 aa).

Positions 3–62 (EKRPRTAFTGDQLARLKREFSENKYLTEQRRTCLAKELNLNESQIKIWFQNKRAKMKKAS) form a DNA-binding region, homeobox. The tract at residues 79–98 (NHSSSSSSSSSSSSSIFLLA) is disordered. A compositionally biased stretch (low complexity) spans 81–98 (SSSSSSSSSSSSSIFLLA).

This sequence belongs to the engrailed homeobox family. In terms of processing, phosphorylated in the Ser-rich domain.

It localises to the nucleus. Functionally, this protein specifies the body segmentation pattern. This Helobdella triserialis (Leech) protein is Homeobox protein Ht-En (HT-EN).